We begin with the raw amino-acid sequence, 213 residues long: Adenylate kinase (213 aa).

14 to 19 provides a ligand contact to ATP; sequence GSGKGT. Residues 34-63 form an NMP region; the sequence is STGDLLRAIIREGTPNGLKAKAYLDKGAFV. Residues Thr35, Arg40, 61-63, 89-92, and Gln96 contribute to the AMP site; these read AFV and GFPR. The tract at residues 129–162 is LID; it reads SRFLCPSCSRIYNTSQGHTECPDCHVPLIRRSDD. Arg130 lines the ATP pocket. Zn(2+)-binding residues include Cys133 and Cys136. 139–140 provides a ligand contact to ATP; sequence IY. Zn(2+) is bound by residues Cys149 and Cys152. Residues Arg159 and Arg170 each contribute to the AMP site. Asn198 contributes to the ATP binding site.

Belongs to the adenylate kinase family. As to quaternary structure, monomer.

Its subcellular location is the cytoplasm. The enzyme catalyses AMP + ATP = 2 ADP. It functions in the pathway purine metabolism; AMP biosynthesis via salvage pathway; AMP from ADP: step 1/1. In terms of biological role, catalyzes the reversible transfer of the terminal phosphate group between ATP and AMP. Plays an important role in cellular energy homeostasis and in adenine nucleotide metabolism. This Chlamydia pneumoniae (Chlamydophila pneumoniae) protein is Adenylate kinase.